The chain runs to 284 residues: Ubiquinone biosynthesis protein COQ4, mitochondrial (284 aa).

4 residues coordinate Zn(2+): His165, Asp166, His169, and Glu181.

It belongs to the COQ4 family. As to quaternary structure, component of a multi-subunit COQ enzyme complex, composed of at least COQ3, COQ4, COQ5, COQ6, COQ7 and COQ9. Requires Zn(2+) as cofactor.

The protein resides in the mitochondrion inner membrane. It catalyses the reaction a 4-hydroxy-3-methoxy-5-(all-trans-polyprenyl)benzoate + H(+) = a 2-methoxy-6-(all-trans-polyprenyl)phenol + CO2. It participates in cofactor biosynthesis; ubiquinone biosynthesis. Its function is as follows. Lyase that catalyzes the C1-decarboxylation of 4-hydroxy-3-methoxy-5-(all-trans-polyprenyl)benzoic acid into 2-methoxy-6-(all-trans-polyprenyl)phenol during ubiquinone biosynthesis. The polypeptide is Ubiquinone biosynthesis protein COQ4, mitochondrial (Ajellomyces dermatitidis (strain ER-3 / ATCC MYA-2586) (Blastomyces dermatitidis)).